Reading from the N-terminus, the 339-residue chain is MLEERRLEVLRAIVEDFVLSNEPVGSKTLAERHALGVSPATVRNDMSALEEEGYITQPHTSAGRIPTDKGYRLFVDRLSGVKPLSRAERRAIQSFLEGAVDLDDVVRRSVRLLAQLTRQVAVVQYPSLSSSSVRHIEIVTLNPNRLLLVLITDTGRVEQRVVDIPTPVDDGVVGELRGLLNGSLRGRRVVDATEVAADLPETVRPDLRPHLTTLTTVVLEALLERQEERVALAGTANLTRSSVDFADSLRFILEALEEQVVLLKLIGSARETGTVTVRIGRETDVDALRSTSVIATGYGLGPAVLGGMGVVGPMRMDYPGTMAAVRAVAKYVGELLGAD.

Belongs to the HrcA family.

Functionally, negative regulator of class I heat shock genes (grpE-dnaK-dnaJ and groELS operons). Prevents heat-shock induction of these operons. This is Heat-inducible transcription repressor HrcA from Parafrankia sp. (strain EAN1pec).